We begin with the raw amino-acid sequence, 108 residues long: Thiosulfate sulfurtransferase GlpE (108 aa).

The 89-residue stretch at 17-105 (QEKEAVLVDI…WQRQFPAEVA (89 aa)) folds into the Rhodanese domain. The active-site Cysteine persulfide intermediate is cysteine 65.

The protein belongs to the GlpE family.

The protein resides in the cytoplasm. It carries out the reaction thiosulfate + hydrogen cyanide = thiocyanate + sulfite + 2 H(+). The catalysed reaction is thiosulfate + [thioredoxin]-dithiol = [thioredoxin]-disulfide + hydrogen sulfide + sulfite + 2 H(+). Functionally, transferase that catalyzes the transfer of sulfur from thiosulfate to thiophilic acceptors such as cyanide or dithiols. May function in a CysM-independent thiosulfate assimilation pathway by catalyzing the conversion of thiosulfate to sulfite, which can then be used for L-cysteine biosynthesis. This is Thiosulfate sulfurtransferase GlpE from Escherichia coli O45:K1 (strain S88 / ExPEC).